The following is a 289-amino-acid chain: Serine/threonine-protein phosphatase Pgam5, mitochondrial (289 aa).

The helical transmembrane segment at 7 to 23 (FVCGTGAGLAAYYLQRL) threads the bilayer.

Belongs to the phosphoglycerate mutase family. BPG-dependent PGAM subfamily. As to quaternary structure, interacts with Pk92B/ASK1.

It localises to the mitochondrion outer membrane. The catalysed reaction is O-phospho-L-seryl-[protein] + H2O = L-seryl-[protein] + phosphate. It catalyses the reaction O-phospho-L-threonyl-[protein] + H2O = L-threonyl-[protein] + phosphate. Its function is as follows. Displays phosphatase activity for serine/threonine residues, and dephosphorylates and activates Pk92B kinase. Has apparently no phosphoglycerate mutase activity. This Drosophila melanogaster (Fruit fly) protein is Serine/threonine-protein phosphatase Pgam5, mitochondrial (Pgam5).